The primary structure comprises 32 residues: Islet amyloid polypeptide (32 aa).

Belongs to the calcitonin family. Can form homodimers. Interacts with IDE and INS. Interaction with INS inhibits homodimerization and fibril formation.

The protein resides in the secreted. Its function is as follows. Amylin/IAPP is a glucoregulatory peptide hormone that plays an important role in the regulation of energy homeostasis. Selectively inhibits insulin-stimulated glucose utilization and glycogen deposition in muscle, while not affecting adipocyte glucose metabolism. IAPP function is mediated by the CALCR-RAMPs (AMYRs) receptor complexes. Amylin can also bind CALCR receptor in the absence of RAMPs, although it is more selective for AMYRs. This Ovis aries (Sheep) protein is Islet amyloid polypeptide (IAPP).